Consider the following 271-residue polypeptide: Putative hydro-lyase OCAR_7359/OCA5_c07590 (271 aa).

The protein belongs to the D-glutamate cyclase family.

In Afipia carboxidovorans (strain ATCC 49405 / DSM 1227 / KCTC 32145 / OM5) (Oligotropha carboxidovorans), this protein is Putative hydro-lyase OCAR_7359/OCA5_c07590.